Here is a 102-residue protein sequence, read N- to C-terminus: MTDETASQEASQSTDAAAPARGFRKVREGLVVSDKMTKTVVVAVEDRVQHPLYGKTIRRTKKVKAHDESGTTGVGDRVLLMETRPLSATKRWRIVQVLEKAK.

Polar residues predominate over residues 1-15 (MTDETASQEASQSTD). Residues 1–20 (MTDETASQEASQSTDAAAPA) form a disordered region.

Belongs to the universal ribosomal protein uS17 family. Part of the 30S ribosomal subunit.

Functionally, one of the primary rRNA binding proteins, it binds specifically to the 5'-end of 16S ribosomal RNA. In Frankia casuarinae (strain DSM 45818 / CECT 9043 / HFP020203 / CcI3), this protein is Small ribosomal subunit protein uS17.